The chain runs to 331 residues: Proline-rich protein 33 (331 aa).

Disordered stretches follow at residues 1–112 (MGPQ…SVPR), 128–185 (SLES…PKVA), and 204–247 (APEP…APAS). The span at 94 to 105 (PEEPPVPRPPPG) shows a compositional bias: pro residues. Residues 149 to 169 (PPMAGPAAEAERVSSPAWASS) show a composition bias toward low complexity. Residues 170–185 (PTPPSGPHPCPVPKVA) are compositionally biased toward pro residues. Positions 217 to 238 (EPEVPTPTEQEVPAPTEQEVPA) are enriched in low complexity.

In Homo sapiens (Human), this protein is Proline-rich protein 33 (PRR33).